A 196-amino-acid polypeptide reads, in one-letter code: 3-isopropylmalate dehydratase small subunit (196 aa).

It belongs to the LeuD family. LeuD type 1 subfamily. In terms of assembly, heterodimer of LeuC and LeuD.

It carries out the reaction (2R,3S)-3-isopropylmalate = (2S)-2-isopropylmalate. It participates in amino-acid biosynthesis; L-leucine biosynthesis; L-leucine from 3-methyl-2-oxobutanoate: step 2/4. Its function is as follows. Catalyzes the isomerization between 2-isopropylmalate and 3-isopropylmalate, via the formation of 2-isopropylmaleate. The chain is 3-isopropylmalate dehydratase small subunit from Streptococcus gordonii (strain Challis / ATCC 35105 / BCRC 15272 / CH1 / DL1 / V288).